Consider the following 62-residue polypeptide: Photosystem II reaction center protein Z (62 aa).

Helical transmembrane passes span 8–28 (ALLALIFVSFALVVGVPVVFA) and 41–61 (FSGLSLWLLLVFVVGILNSFV).

This sequence belongs to the PsbZ family. In terms of assembly, PSII is composed of 1 copy each of membrane proteins PsbA, PsbB, PsbC, PsbD, PsbE, PsbF, PsbH, PsbI, PsbJ, PsbK, PsbL, PsbM, PsbT, PsbY, PsbZ, Psb30/Ycf12, at least 3 peripheral proteins of the oxygen-evolving complex and a large number of cofactors. It forms dimeric complexes.

Its subcellular location is the plastid. The protein localises to the chloroplast thylakoid membrane. Controls the interaction of photosystem II (PSII) cores with the light-harvesting antenna, aiding in the dissipation of excitation energy within PSII. PSII is a light-driven water plastoquinone oxidoreductase, using light energy to abstract electrons from H(2)O, generating a proton gradient subsequently used for ATP formation. This is Photosystem II reaction center protein Z from Chlamydomonas reinhardtii (Chlamydomonas smithii).